The sequence spans 339 residues: Phenylalanine--tRNA ligase alpha subunit (339 aa).

Glu-254 contributes to the Mg(2+) binding site.

The protein belongs to the class-II aminoacyl-tRNA synthetase family. Phe-tRNA synthetase alpha subunit type 1 subfamily. Tetramer of two alpha and two beta subunits. Mg(2+) serves as cofactor.

It localises to the cytoplasm. The enzyme catalyses tRNA(Phe) + L-phenylalanine + ATP = L-phenylalanyl-tRNA(Phe) + AMP + diphosphate + H(+). The sequence is that of Phenylalanine--tRNA ligase alpha subunit from Lachnoclostridium phytofermentans (strain ATCC 700394 / DSM 18823 / ISDg) (Clostridium phytofermentans).